Here is a 140-residue protein sequence, read N- to C-terminus: Fluoride-specific ion channel FluC 2 (140 aa).

Transmembrane regions (helical) follow at residues 7-27 (VPPL…LGAL), 45-65 (WATF…MVLV), 77-97 (PFAG…GLEI), and 106-126 (VLEA…GVVL). 2 residues coordinate Na(+): Gly85 and Thr88.

It belongs to the fluoride channel Fluc/FEX (TC 1.A.43) family.

The protein localises to the cell membrane. It carries out the reaction fluoride(in) = fluoride(out). Its activity is regulated as follows. Na(+) is not transported, but it plays an essential structural role and its presence is essential for fluoride channel function. Its function is as follows. Fluoride-specific ion channel. Important for reducing fluoride concentration in the cell, thus reducing its toxicity. This is Fluoride-specific ion channel FluC 2 from Nocardia farcinica (strain IFM 10152).